Reading from the N-terminus, the 441-residue chain is Protein MONOCULM 1 (441 aa).

Residues 1–33 form a disordered region; it reads MLRSLHSSSSSDTDNNSGGCKNNGGGGGEAAAA. The span at 7-20 shows a compositional bias: low complexity; sequence SSSSSDTDNNSGGC. Residues 21–33 show a composition bias toward gly residues; sequence KNNGGGGGEAAAA. Positions 41–437 constitute a GRAS domain; sequence RAVAAAAPST…RPLLSVSAWQ (397 aa). The tract at residues 48–126 is leucine repeat I (LRI); that stretch reads PSTRDLLLAC…GAARPASSGA (79 aa). The VHIID stretch occupies residues 127–195; sequence YLAFNQIAPF…LGPPEVRVTG (69 aa). The VHIID signature appears at 158–162; the sequence is VHILD. Positions 205-256 are leucine repeat II (LRII); sequence RTGNRLRAFARSIHLPFHFTPLLLSCATTAPHHVAGTSTGAAAAASTAAAAT. Residues 266 to 361 are PFYRE; sequence LAVNCVMFLH…QEVLGREIEA (96 aa). Residues 364–437 are SAW; that stretch reads GPSGGRWWRG…RPLLSVSAWQ (74 aa).

The protein belongs to the GRAS family. In terms of tissue distribution, expressed in a small number of epidermal or subepidermal cells at the leaf axils, in axillary meristems and the entire tiller buds. Undetected in the shoot apical meristem.

The protein localises to the nucleus. In terms of biological role, putative transcription regulator that controls rice tillering by initiating axillary buds and promoting their outgrowth. Rice tiller is a specialized grain-bearing branch that is formed on the unelongated basal internode and grows independently of the mother stem (culm) by means of its own adventitious roots. The chain is Protein MONOCULM 1 from Oryza sativa subsp. japonica (Rice).